We begin with the raw amino-acid sequence, 332 residues long: DNA-directed RNA polymerase subunit alpha (332 aa).

An alpha N-terminal domain (alpha-NTD) region spans residues 1 to 226 (MLIAQRPTLT…ELFGLCRELN (226 aa)). Residues 245 to 332 (PEMNIPIEDL…GGTFFSPEDE (88 aa)) are alpha C-terminal domain (alpha-CTD).

It belongs to the RNA polymerase alpha chain family. As to quaternary structure, homodimer. The RNAP catalytic core consists of 2 alpha, 1 beta, 1 beta' and 1 omega subunit. When a sigma factor is associated with the core the holoenzyme is formed, which can initiate transcription.

The catalysed reaction is RNA(n) + a ribonucleoside 5'-triphosphate = RNA(n+1) + diphosphate. Functionally, DNA-dependent RNA polymerase catalyzes the transcription of DNA into RNA using the four ribonucleoside triphosphates as substrates. This chain is DNA-directed RNA polymerase subunit alpha, found in Bifidobacterium adolescentis (strain ATCC 15703 / DSM 20083 / NCTC 11814 / E194a).